Consider the following 307-residue polypeptide: MRILLAEPRGFCAGVDRAIAIVLKALEKFGPPIYVRHEIVHNRWVVEHLRNQGAVFVHELDEIPDGAVAIYSAHGVSKAVQAEGERRPLHILDATCPLVDKVHREAERLDHDHYQVLLIGHAGHPEVEGTMGQLQQARMKLISHPDDVAQLRLSNPQKVAYITQTTLSVDETRAMVAQLKARFPTIKEPAKEDICYATQNRQNAVKALAQASDLILVLGAPNSSNSNRLREVAEQHGCRAFLIENAKDVEIQWLEGVETLGITAGASAPEILVEELLAHLHAEQHQVELLSVTKEYLAFPLPLELRE.

Cysteine 12 contacts [4Fe-4S] cluster. 2 residues coordinate (2E)-4-hydroxy-3-methylbut-2-enyl diphosphate: histidine 41 and histidine 74. Dimethylallyl diphosphate-binding residues include histidine 41 and histidine 74. Positions 41 and 74 each coordinate isopentenyl diphosphate. Cysteine 96 contributes to the [4Fe-4S] cluster binding site. Histidine 124 is a binding site for (2E)-4-hydroxy-3-methylbut-2-enyl diphosphate. Dimethylallyl diphosphate is bound at residue histidine 124. An isopentenyl diphosphate-binding site is contributed by histidine 124. Catalysis depends on glutamate 126, which acts as the Proton donor. Threonine 165 is a binding site for (2E)-4-hydroxy-3-methylbut-2-enyl diphosphate. Cysteine 195 lines the [4Fe-4S] cluster pocket. Residues serine 223, serine 224, asparagine 225, and serine 267 each coordinate (2E)-4-hydroxy-3-methylbut-2-enyl diphosphate. Dimethylallyl diphosphate-binding residues include serine 223, serine 224, asparagine 225, and serine 267. Serine 223, serine 224, asparagine 225, and serine 267 together coordinate isopentenyl diphosphate.

Belongs to the IspH family. Requires [4Fe-4S] cluster as cofactor.

The catalysed reaction is isopentenyl diphosphate + 2 oxidized [2Fe-2S]-[ferredoxin] + H2O = (2E)-4-hydroxy-3-methylbut-2-enyl diphosphate + 2 reduced [2Fe-2S]-[ferredoxin] + 2 H(+). It catalyses the reaction dimethylallyl diphosphate + 2 oxidized [2Fe-2S]-[ferredoxin] + H2O = (2E)-4-hydroxy-3-methylbut-2-enyl diphosphate + 2 reduced [2Fe-2S]-[ferredoxin] + 2 H(+). It participates in isoprenoid biosynthesis; dimethylallyl diphosphate biosynthesis; dimethylallyl diphosphate from (2E)-4-hydroxy-3-methylbutenyl diphosphate: step 1/1. The protein operates within isoprenoid biosynthesis; isopentenyl diphosphate biosynthesis via DXP pathway; isopentenyl diphosphate from 1-deoxy-D-xylulose 5-phosphate: step 6/6. Functionally, catalyzes the conversion of 1-hydroxy-2-methyl-2-(E)-butenyl 4-diphosphate (HMBPP) into a mixture of isopentenyl diphosphate (IPP) and dimethylallyl diphosphate (DMAPP). Acts in the terminal step of the DOXP/MEP pathway for isoprenoid precursor biosynthesis. This is 4-hydroxy-3-methylbut-2-enyl diphosphate reductase from Magnetococcus marinus (strain ATCC BAA-1437 / JCM 17883 / MC-1).